Here is a 658-residue protein sequence, read N- to C-terminus: Threonine--tRNA ligase (658 aa).

The 64-residue stretch at 1 to 64 (MSCSVSLSFP…GQSGQIEIIT (64 aa)) folds into the TGS domain. The tract at residues 246 to 549 (DHRRLGREMD…LIENFAGHMP (304 aa)) is catalytic. Zn(2+) contacts are provided by C343, H394, and H526.

It belongs to the class-II aminoacyl-tRNA synthetase family. In terms of assembly, homodimer. The cofactor is Zn(2+).

It localises to the cytoplasm. The enzyme catalyses tRNA(Thr) + L-threonine + ATP = L-threonyl-tRNA(Thr) + AMP + diphosphate + H(+). In terms of biological role, catalyzes the attachment of threonine to tRNA(Thr) in a two-step reaction: L-threonine is first activated by ATP to form Thr-AMP and then transferred to the acceptor end of tRNA(Thr). Also edits incorrectly charged L-seryl-tRNA(Thr). This is Threonine--tRNA ligase from Bartonella quintana (strain Toulouse) (Rochalimaea quintana).